The sequence spans 254 residues: Syntaxin-6 (254 aa).

The Cytoplasmic portion of the chain corresponds to 1 to 233 (MSMEDPFFVV…VSHMTSDRRQ (233 aa)). The stretch at 46-72 (TTNELRNNLRSIEWDLEDLDETISIVE) forms a coiled coil. Residues 103–138 (KDQMSNSSMQALAERKNRQALLGESSSQSWSSGPDK) form a disordered region. The t-SNARE coiled-coil homology domain maps to 162 to 224 (QLIVEQQDEQ…DNVMKKLAKV (63 aa)). A helical; Anchor for type IV membrane protein membrane pass occupies residues 234 to 254 (WCAIIVLFVILLVVLVLFLVL).

It belongs to the syntaxin family.

It is found in the golgi apparatus membrane. The protein resides in the golgi apparatus. It localises to the trans-Golgi network membrane. Its subcellular location is the recycling endosome membrane. Its function is as follows. SNARE promoting movement of transport vesicles to target membranes. Targets endosomes to the trans-Golgi network, and may therefore function in retrograde trafficking. Together with SNARE STX12, promotes movement of vesicles from endosomes to the cell membrane, and may therefore function in the endocytic recycling pathway. The protein is Syntaxin-6 (STX6) of Gallus gallus (Chicken).